A 242-amino-acid polypeptide reads, in one-letter code: Haloacid dehalogenase-like hydrolase domain-containing protein 3 (242 aa).

This sequence belongs to the HAD-like hydrolase superfamily.

This is Haloacid dehalogenase-like hydrolase domain-containing protein 3 (hdhd3) from Danio rerio (Zebrafish).